The primary structure comprises 884 residues: Translation initiation factor IF-2 (884 aa).

Composition is skewed to basic and acidic residues over residues 110–153 and 193–234; these read AKAK…KEKA and KQKE…DHHV. The disordered stretch occupies residues 110 to 291; that stretch reads AKAKAEADAK…NRSTAPQSMA (182 aa). Basic residues predominate over residues 255-268; that stretch reads GRRARNKPTNKKRG. Residues 384 to 553 form the tr-type G domain; it reads TRAPVVTIMG…LLQSEVLELK (170 aa). The interval 393-400 is G1; sequence GHVDHGKT. 393 to 400 contributes to the GTP binding site; that stretch reads GHVDHGKT. The segment at 418–422 is G2; it reads GITQH. A G3 region spans residues 439 to 442; the sequence is DTPG. Residues 439-443 and 493-496 each bind GTP; these read DTPGH and NKMD. A G4 region spans residues 493–496; that stretch reads NKMD. Residues 529-531 form a G5 region; sequence SAK.

This sequence belongs to the TRAFAC class translation factor GTPase superfamily. Classic translation factor GTPase family. IF-2 subfamily.

It localises to the cytoplasm. Functionally, one of the essential components for the initiation of protein synthesis. Protects formylmethionyl-tRNA from spontaneous hydrolysis and promotes its binding to the 30S ribosomal subunits. Also involved in the hydrolysis of GTP during the formation of the 70S ribosomal complex. This chain is Translation initiation factor IF-2, found in Shewanella denitrificans (strain OS217 / ATCC BAA-1090 / DSM 15013).